The chain runs to 437 residues: 3-phosphoshikimate 1-carboxyvinyltransferase (437 aa).

The 3-phosphoshikimate site is built by K22, S23, and R27. K22 lines the phosphoenolpyruvate pocket. Phosphoenolpyruvate contacts are provided by G94 and R122. S167, Q169, D314, and K341 together coordinate 3-phosphoshikimate. Residue Q169 coordinates phosphoenolpyruvate. The active-site Proton acceptor is D314. R345 and R389 together coordinate phosphoenolpyruvate.

This sequence belongs to the EPSP synthase family. As to quaternary structure, monomer.

The protein localises to the cytoplasm. The catalysed reaction is 3-phosphoshikimate + phosphoenolpyruvate = 5-O-(1-carboxyvinyl)-3-phosphoshikimate + phosphate. Its pathway is metabolic intermediate biosynthesis; chorismate biosynthesis; chorismate from D-erythrose 4-phosphate and phosphoenolpyruvate: step 6/7. Functionally, catalyzes the transfer of the enolpyruvyl moiety of phosphoenolpyruvate (PEP) to the 5-hydroxyl of shikimate-3-phosphate (S3P) to produce enolpyruvyl shikimate-3-phosphate and inorganic phosphate. In Oenococcus oeni (strain ATCC BAA-331 / PSU-1), this protein is 3-phosphoshikimate 1-carboxyvinyltransferase.